The following is a 401-amino-acid chain: MKAITLLGSTGSIGTQTLDIVAQYPDQFRIVGMAAGRNIELLSQQIRQFRPEIVAIADPNQLSDLKDAIADVDPQPQLLAGEAGVVEVAAYGDAESVVTGIVGCAGLLPTIAAIKAGKDIALANKETLIAGGPVVLPLVEKHGVKLLPADSEHSAIFQCLQGVPEGGLRRIILTASGGAFRDWPVEKLPEVTVADALKHPNWSMGKKITVDSATLMNKGLEVIEAHYLFGVDYDHIDIVIHPQSIIHSLIELQDTSVLAQLGWPDMRLPLLYSLSWPERIATDWEQLDLVKSGDLTFREPNHQKYPCMQLAYDVGRMGGAMPAVMNAANEQAVALFLEEKISFLDIPKVIETACDRYQSQNTLQPSLEDILAADQWARQEILTISQSQTPVVTASPQLSAI.

NADPH contacts are provided by Thr-10, Gly-11, Ser-12, Ile-13, Gly-36, Arg-37, Asn-38, and Asn-124. Position 125 (Lys-125) interacts with 1-deoxy-D-xylulose 5-phosphate. Glu-126 is a binding site for NADPH. A Mn(2+)-binding site is contributed by Asp-150. Ser-151, Glu-152, Ser-176, and His-199 together coordinate 1-deoxy-D-xylulose 5-phosphate. Glu-152 lines the Mn(2+) pocket. Gly-205 is an NADPH binding site. Residues Ser-212, Asn-217, Lys-218, and Glu-221 each coordinate 1-deoxy-D-xylulose 5-phosphate. Glu-221 is a Mn(2+) binding site.

The protein belongs to the DXR family. Mg(2+) serves as cofactor. Requires Mn(2+) as cofactor.

The catalysed reaction is 2-C-methyl-D-erythritol 4-phosphate + NADP(+) = 1-deoxy-D-xylulose 5-phosphate + NADPH + H(+). Its pathway is isoprenoid biosynthesis; isopentenyl diphosphate biosynthesis via DXP pathway; isopentenyl diphosphate from 1-deoxy-D-xylulose 5-phosphate: step 1/6. Its function is as follows. Catalyzes the NADPH-dependent rearrangement and reduction of 1-deoxy-D-xylulose-5-phosphate (DXP) to 2-C-methyl-D-erythritol 4-phosphate (MEP). This Acaryochloris marina (strain MBIC 11017) protein is 1-deoxy-D-xylulose 5-phosphate reductoisomerase.